Here is a 179-residue protein sequence, read N- to C-terminus: Ribosome maturation factor RimM (179 aa).

Positions 103 to 176 constitute a PRC barrel domain; that stretch reads EPDTYYDHQL…IVEIDPPKGL (74 aa).

It belongs to the RimM family. In terms of assembly, binds ribosomal protein uS19.

It localises to the cytoplasm. Functionally, an accessory protein needed during the final step in the assembly of 30S ribosomal subunit, possibly for assembly of the head region. Essential for efficient processing of 16S rRNA. May be needed both before and after RbfA during the maturation of 16S rRNA. It has affinity for free ribosomal 30S subunits but not for 70S ribosomes. The sequence is that of Ribosome maturation factor RimM from Mycobacterium leprae (strain Br4923).